The chain runs to 74 residues: MIQAAKYIGAGLATIGVSGAGVGIGLIFSNLISGTSRNPSVRPHLFSMAILGFALTEATGLFCLMLAFLIIYAA.

A run of 2 helical transmembrane segments spans residues 8–28 and 50–70; these read IGAG…GLIF and ILGF…AFLI.

Belongs to the ATPase C chain family. As to quaternary structure, F-type ATPases have 2 components, CF(1) - the catalytic core - and CF(0) - the membrane proton channel. CF(1) has five subunits: alpha(3), beta(3), gamma(1), delta(1), epsilon(1). CF(0) has three main subunits: a, b and c.

It is found in the mitochondrion membrane. Its function is as follows. Mitochondrial membrane ATP synthase (F(1)F(0) ATP synthase or Complex V) produces ATP from ADP in the presence of a proton gradient across the membrane which is generated by electron transport complexes of the respiratory chain. F-type ATPases consist of two structural domains, F(1) - containing the extramembraneous catalytic core and F(0) - containing the membrane proton channel, linked together by a central stalk and a peripheral stalk. During catalysis, ATP synthesis in the catalytic domain of F(1) is coupled via a rotary mechanism of the central stalk subunits to proton translocation. Part of the complex F(0) domain. A homomeric c-ring of probably 10 subunits is part of the complex rotary element. This chain is ATP synthase subunit 9, mitochondrial (atp9), found in Schizosaccharomyces pombe (strain 972 / ATCC 24843) (Fission yeast).